The sequence spans 532 residues: Di/tripeptide-binding protein 2 (532 aa).

An N-terminal signal peptide occupies residues Met-1–Ala-24.

The protein belongs to the bacterial solute-binding protein 5 family. As to quaternary structure, the complex is composed of two ATP-binding proteins (DppD and DppF), two transmembrane proteins (DppB and DppC) and a solute-binding protein (DppA2). Five orthologous SBPs (DppA1-A5) are present in P.aeruginosa, which increases the substrate specificity of the DppBCDF transporter.

Functionally, part of the ABC transporter DppABCDF involved in the uptake of various di/tripeptides. Shows high flexibility on substrate recognition. Efficiently uses tripeptides. The polypeptide is Di/tripeptide-binding protein 2 (Pseudomonas aeruginosa (strain UCBPP-PA14)).